The following is a 330-amino-acid chain: 1,8-cineole synthase (330 aa).

Position 81 (Asp81) interacts with Mg(2+). A DDXXD motif motif is present at residues 81 to 85 (DDHFD). Position 174 (Arg174) interacts with substrate. The Mg(2+) site is built by Asn220 and Ser224. Residues 220–228 (NDVLSLEKE) carry the NXXXSXXXE motif motif. Lys227 contacts substrate. Glu228 contributes to the Mg(2+) binding site. 314–315 (RY) lines the substrate pocket.

Belongs to the terpene synthase family. As to quaternary structure, homodimer. Requires Mg(2+) as cofactor.

It catalyses the reaction (2E)-geranyl diphosphate + H2O = 1,8-cineole + diphosphate. It carries out the reaction neryl diphosphate + H2O = 1,8-cineole + diphosphate. Its function is as follows. In vitro, catalyzes the formation of 1,8-cineole from geranyl diphosphate (GPP). Can also accept neryl diphosphate (NPP) as substrate to produce 1,8-cineole. This is 1,8-cineole synthase from Streptomyces clavuligerus.